The primary structure comprises 218 residues: Monomethylamine corrinoid protein 2 (218 aa).

In terms of domain architecture, B12-binding N-terminal spans Met1 to Glu91. The B12-binding domain maps to Thr94–Lys218. His107 provides a ligand contact to methylcob(III)alamin.

It belongs to the methylamine corrinoid protein family. In terms of assembly, can form a complex with MtmB.

It functions in the pathway one-carbon metabolism; methanogenesis from methylamine. Its function is as follows. Acts as a methyl group carrier between MtmB and MtbA. This chain is Monomethylamine corrinoid protein 2 (mtmC2), found in Methanosarcina mazei (strain ATCC BAA-159 / DSM 3647 / Goe1 / Go1 / JCM 11833 / OCM 88) (Methanosarcina frisia).